A 165-amino-acid polypeptide reads, in one-letter code: Disulfide bond formation protein B (165 aa).

Residues 1-10 lie on the Cytoplasmic side of the membrane; sequence MPAWLTNRTI. Residues 11 to 27 form a helical membrane-spanning segment; sequence YFLCFLAIAGLMGFAFY. The Periplasmic portion of the chain corresponds to 28-45; the sequence is LQYVKDLEPCPLCMAQRI. Cys-37 and Cys-40 are disulfide-bonded. A helical transmembrane segment spans residues 46-62; that stretch reads AFVLAGLVFLAAALHNP. The Cytoplasmic portion of the chain corresponds to 63–68; it reads KNTGTT. The helical transmembrane segment at 69–86 threads the bilayer; sequence VYAFLGWVTTLGGAALAT. Over 87-143 the chain is Periplasmic; it reads RQLWLQSLPADQVPACGPGLEYMLEAFPFSEVLTMMLTGTGECAEVQWTFLGLSIPG. Cysteines 102 and 129 form a disulfide. The helical transmembrane segment at 144-162 threads the bilayer; it reads WTLVAFIGFTAVWAFAWVR. Residues 163–165 lie on the Cytoplasmic side of the membrane; it reads RPR.

This sequence belongs to the DsbB family.

It localises to the cell inner membrane. Functionally, required for disulfide bond formation in some periplasmic proteins. Acts by oxidizing the DsbA protein. This Hahella chejuensis (strain KCTC 2396) protein is Disulfide bond formation protein B.